A 435-amino-acid chain; its full sequence is MTTFDIGSPLIAIAQKTRKAASKLAILSTEAKNQAIIAIAQALESAKDEILQANIADCEAANAEGIPKPLYKRLQLDEHKLRDAIVGVQDVGKLDDPVGKVQIHRELDTGLILKRITCPLGVLGIIFEARPEAAIQIASLAIKSGNGVILKCGKEAVRSCEAIVKAIKQGLSHTAVNPDTVQLLTTREETLELLKLDKYVDLIIPRGSNSFVRFVQENTRIPVLGHADGICHLYIDKAADISKAVPITVDAKAQYPAVCNAIETLLVHQSIATEFLPKVADALQERHVELRGDKRTLKILPNIVSATEIDWETEYSDYILSIKIVDSIEDAIAHINEYGSRHTDAIITEDSTSVETFFGLVNSANIFHNCSTRFADGFRYGFGAEVGISTQQMPPRGPVGLEGLVTYKYQMTGDGHIVATYTGANAKAFTHRDLV.

This sequence belongs to the gamma-glutamyl phosphate reductase family.

It is found in the cytoplasm. It carries out the reaction L-glutamate 5-semialdehyde + phosphate + NADP(+) = L-glutamyl 5-phosphate + NADPH + H(+). The protein operates within amino-acid biosynthesis; L-proline biosynthesis; L-glutamate 5-semialdehyde from L-glutamate: step 2/2. Its function is as follows. Catalyzes the NADPH-dependent reduction of L-glutamate 5-phosphate into L-glutamate 5-semialdehyde and phosphate. The product spontaneously undergoes cyclization to form 1-pyrroline-5-carboxylate. The protein is Gamma-glutamyl phosphate reductase of Nostoc punctiforme (strain ATCC 29133 / PCC 73102).